Here is a 492-residue protein sequence, read N- to C-terminus: N-succinylglutamate 5-semialdehyde dehydrogenase (492 aa).

220-225 (GSANTG) is a binding site for NAD(+). Catalysis depends on residues Glu243 and Cys277.

It belongs to the aldehyde dehydrogenase family. AstD subfamily.

The enzyme catalyses N-succinyl-L-glutamate 5-semialdehyde + NAD(+) + H2O = N-succinyl-L-glutamate + NADH + 2 H(+). Its pathway is amino-acid degradation; L-arginine degradation via AST pathway; L-glutamate and succinate from L-arginine: step 4/5. Its function is as follows. Catalyzes the NAD-dependent reduction of succinylglutamate semialdehyde into succinylglutamate. The protein is N-succinylglutamate 5-semialdehyde dehydrogenase of Escherichia coli O9:H4 (strain HS).